The following is a 257-amino-acid chain: Outer membrane protein YaiO (257 aa).

A signal peptide spans methionine 1–alanine 19.

It is found in the cell outer membrane. The chain is Outer membrane protein YaiO (yaiO) from Escherichia coli (strain K12).